The sequence spans 609 residues: Leukotriene A-4 hydrolase (609 aa).

A peptide contacts are provided by residues 131-133 (QCQ) and 263-268 (PYGGME). Histidine 292 serves as a coordination point for Zn(2+). Residue glutamate 293 is the Proton acceptor of the active site. The Zn(2+) site is built by histidine 296 and glutamate 315. The active-site Proton donor is the tyrosine 380. 560 to 562 (RMK) is an a peptide binding site.

The protein belongs to the peptidase M1 family. As to quaternary structure, homodimer. It depends on Zn(2+) as a cofactor. As to expression, expressed in oocytes.

It localises to the cytoplasm. The enzyme catalyses Release of the N-terminal residue from a tripeptide.. The catalysed reaction is leukotriene A4 + H2O = leukotriene B4. Its pathway is lipid metabolism; leukotriene B4 biosynthesis. The epoxide hydrolase activity is mildly restrained by suicide inactivation, possibly involving binding of LTA4 to Tyr-380. Bifunctional zinc metalloenzyme that comprises both epoxide hydrolase (EH) and aminopeptidase activities. Acts as an epoxide hydrolase to catalyze the conversion of leukotriene A4 (LTA4) to the pro-inflammatory mediator leukotriene B4 (LTB4). During the conversion of LTA4 to LTB4, a second product is formed, the isomeric delta6-trans-delta8-cis-LTB4 (5S,12R-dihydroxy-6,10-trans-8,14-cis-eicosatetraenoic acid), with a relative formation of 10% delta6-trans-delta8-cis-LTB4 compared to 90% LTB4. The production of delta6-trans-delta8-cis-LTB4 seems to depend on the phenylalanine residue at position 375. Also has aminopeptidase activity. In Xenopus laevis (African clawed frog), this protein is Leukotriene A-4 hydrolase.